A 117-amino-acid chain; its full sequence is MALYEHVMIARQDLSNAQAEALNEHFGAVLADNGGTVVDTEYWGVKTMAYKINKNRKGHYSYLRTDAPSDAVQEMERLMRLHDDVMRVLTIKVDAHDEGPSVQMQKRDEREGRRERR.

A disordered region spans residues 96-117; the sequence is HDEGPSVQMQKRDEREGRRERR.

This sequence belongs to the bacterial ribosomal protein bS6 family.

Binds together with bS18 to 16S ribosomal RNA. The protein is Small ribosomal subunit protein bS6 of Jannaschia sp. (strain CCS1).